The chain runs to 230 residues: Ribonuclease 1 (230 aa).

An N-terminal signal peptide occupies residues 1–22; it reads MKILLASLCLISLLVILPSVFS. Glutamine 38 is an RNA binding site. Cysteines 44 and 50 form a disulfide. RNA is bound by residues histidine 65, phenylalanine 115, 118 to 119, and 122 to 123; these read HE and KH. Histidine 65 acts as the Proton donor in catalysis. Cystine bridges form between cysteine 80-cysteine 126, cysteine 186-cysteine 221, and cysteine 202-cysteine 213. Glutamate 119 is a catalytic residue. Residue histidine 123 is the Proton acceptor of the active site.

This sequence belongs to the RNase T2 family.

The catalysed reaction is a ribonucleotidyl-ribonucleotide-RNA + H2O = a 3'-end 3'-phospho-ribonucleotide-RNA + a 5'-end dephospho-ribonucleoside-RNA + H(+). In terms of biological role, may remobilize phosphate, particularly when cells senesce or when phosphate becomes limiting. The sequence is that of Ribonuclease 1 (RNS1) from Arabidopsis thaliana (Mouse-ear cress).